Reading from the N-terminus, the 210-residue chain is Mediator of RNA polymerase II transcription subunit 20 (210 aa).

Belongs to the Mediator complex subunit 20 family. Component of the Mediator complex, which is composed of at least 21 subunits that form three structurally distinct submodules. The Mediator head module contains MED6, MED8, MED11, SRB4/MED17, SRB5/MED18, ROX3/MED19, SRB2/MED20 and SRB6/MED22, the middle module contains MED1, MED4, NUT1/MED5, MED7, CSE2/MED9, NUT2/MED10, SRB7/MED21 and SOH1/MED31, and the tail module contains MED2, PGD1/MED3, RGR1/MED14, GAL11/MED15 and SIN4/MED16. The head and the middle modules interact directly with RNA polymerase II, whereas the elongated tail module interacts with gene-specific regulatory proteins. MED1 interacts directly with MED4 and MED7. SRB2/MED20 interacts directly with SRB4/MED17 and SRB5/MED18.

The protein resides in the nucleus. Its function is as follows. Component of the Mediator complex, a coactivator involved in the regulated transcription of nearly all RNA polymerase II-dependent genes. Mediator functions as a bridge to convey information from gene-specific regulatory proteins to the basal RNA polymerase II transcription machinery. The Mediator complex, having a compact conformation in its free form, is recruited to promoters by direct interactions with regulatory proteins and serves for the assembly of a functional preinitiation complex with RNA polymerase II and the general transcription factors. The Mediator complex unfolds to an extended conformation and partially surrounds RNA polymerase II, specifically interacting with the unphosphorylated form of the C-terminal domain (CTD) of RNA polymerase II. The Mediator complex dissociates from the RNA polymerase II holoenzyme and stays at the promoter when transcriptional elongation begins. In Saccharomyces cerevisiae (strain ATCC 204508 / S288c) (Baker's yeast), this protein is Mediator of RNA polymerase II transcription subunit 20 (SRB2).